A 288-amino-acid polypeptide reads, in one-letter code: Transposase InsF for insertion sequence IS3A (288 aa).

One can recognise an Integrase catalytic domain in the interval 124–287; that stretch reads YASGPNQKWA…SPEQFENKNL (164 aa).

It belongs to the transposase IS3/IS150/IS904 family.

Its function is as follows. Involved in the transposition of the insertion sequence IS3. The sequence is that of Transposase InsF for insertion sequence IS3A (insF1) from Escherichia coli (strain K12).